The chain runs to 197 residues: FMN-dependent NADH:quinone oxidoreductase (197 aa).

FMN is bound by residues S10, 16-18, 93-96, and 137-140; these read SQS, MYNF, and TRGG.

It belongs to the azoreductase type 1 family. Homodimer. FMN serves as cofactor.

The catalysed reaction is 2 a quinone + NADH + H(+) = 2 a 1,4-benzosemiquinone + NAD(+). The enzyme catalyses N,N-dimethyl-1,4-phenylenediamine + anthranilate + 2 NAD(+) = 2-(4-dimethylaminophenyl)diazenylbenzoate + 2 NADH + 2 H(+). Its function is as follows. Quinone reductase that provides resistance to thiol-specific stress caused by electrophilic quinones. Functionally, also exhibits azoreductase activity. Catalyzes the reductive cleavage of the azo bond in aromatic azo compounds to the corresponding amines. In Shewanella denitrificans (strain OS217 / ATCC BAA-1090 / DSM 15013), this protein is FMN-dependent NADH:quinone oxidoreductase.